We begin with the raw amino-acid sequence, 347 residues long: MEWRAVSRDKALDMLSTALNCRFDDEGLRISAVSECLRSVLYQYSISETEEARQTVTSLRLTSAVRRKLVPLWPDIADIDNAIHPGIMSILNSLAELGDMIKLEGGNWLTAPPHAVRIDNKMAVFFGGEPSCTFSTGVVAKSAGRVRLVEEKVCTGSVEIWDANEWIGAPAEGNEEWSSRLLSGTISGFIDAPSNMSETTAYVRGKWLHLSELSFNKKQIYLCRMSVDNHFSYYLGEIEAGRLCRMNSLESSDDVRRLRFFLDTKDNCPLKIRIKISNGLARLRLTRRLPRRETKVLLLGWRESGFENEHSGITHHVFPEEILPIVRSAFEGLGIIWINEFTRRNEI.

It is found in the cytoplasm. Its function is as follows. Component of antiviral defense system Druantia type I, composed of DruA, DruB, DruC, DruD and DruE. Expression of Druantia in E.coli (strain MG1655) confers resistance to phage lambda, SECphi18, SECphi27 and T4. This is Druantia protein DruD from Escherichia coli (strain UMEA 4076-1).